A 73-amino-acid polypeptide reads, in one-letter code: Salivary protein FS48 (73 aa).

Positions Met-1–Ala-21 are cleaved as a signal peptide.

It localises to the secreted. In terms of biological role, salivary protein that inhibits host voltage-gated potassium channels Kv1.1/KCNA1, Kv1.2/KCNA2 and Kv1.3/KCNA3 likely via a voltage-independent pore-blocking mechanism. Suppresses expression of the Kv1.3/KCNA3 channel in lipopolysaccharide (LPS)-stimulated mouse macrophages and human T-cells. Down-regulates secretion of nitric oxide (NO) and inflammatory cytokines, such as TNF-alpha/TNF, IL-1beta/IL1B and IL6, in LPS-stimulated mouse macrophages in a manner dependent on Kv1.3/KCNA3 channel blockage. Reduces activation of MAPK and NF-kappa-B signaling pathways in LPS-stimulated mouse macrophages. Modulates intracellular Ca(2+) signaling in human PMA/ionomycin-triggered T-cells. Interferes with the activation of the MAPK, NF-kappa-B and NFATc1 pathways in human PMA/ionomycin-triggered T-cells. Reduces proliferation of human PMA/ionomycin-triggered T-cells. Down-regulates secretion of cytokines, such as TNF-alpha/TNF and IL2, in human PMA/ionomycin-triggered T-cells. This is Salivary protein FS48 from Xenopsylla cheopis (Oriental rat flea).